The sequence spans 873 residues: MSFIMKLHRHFQRTVILLATFCMVSIIISAYYLYSGYKQENELSETASEVDCGDLQHLPYQLMEVKAMKLFDASRTDPTVLVFVESQYSSLGQDIIMILESSRFQYHIEIAPGKGDLPVLIDKMKGKYILIIYENILKYINMDSWNRSLLDKYCVEYGVGVIGFHKTSEKSVQSFQLKGFPFSIYGNLAVKDCCINPHSPLIRVTKSSKLEKGSLPGTDWTVFQINHSAYQPVIFAKVKTPENLSPSISKGAFYATIIHDLGLHDGIQRVLFGNNLNFWLHKLIFIDAISFLSGKRLTLSLDRYILVDIDDIFVGKEGTRMNTNDVKALLDTQNLLRAQITNFTFNLGFSGKFYHTGTEEEDEGDDCLLGSVDEFWWFPHMWSHMQPHLFHNESSLVEQMILNKKFALEHGIPTDMGYAVAPHHSGVYPVHVQLYEAWKKVWNIKITSTEEYPHLKPARYRRGFIHKNIMVLPRQTCGLFTHTIFYKEYPGGPKELDKSIQGGELFFTVVLNPISIFMTHLSNYGNDRLGLYTFVNLANFVKSWTNLRLQTLPPVQLAHKYFELFPDQKDPLWQNPCDDKRHRDIWSKEKTCDRLPKFLVIGPQKTGTTALYLFLVMHPSILSNSPSPKTFEEVQFFNRNNYHRGIDWYMDFFPVPSNVTTDFLFEKSANYFHSEEAPKRAASLVPKAKIITILIDPSDRAYSWYQHQRSHEDPAALKFSFYEVISAGPRAPSELRALQKRCLVPGWYASHIERWLVYFPPFQLLIIDGQQLRTDPATVMDEVQKFLGVLPHYNYSEALTFDSHKGFWCQLLEEGKTKCLGKSKGRKYPPMDSDSRTFLSSYYRDHNVELSKLLHKLGQPLPSWLRQELQKVR.

Over 1–13 (MSFIMKLHRHFQR) the chain is Cytoplasmic. A helical; Signal-anchor for type II membrane protein membrane pass occupies residues 14–34 (TVILLATFCMVSIIISAYYLY). The Lumenal segment spans residues 35-873 (SGYKQENELS…WLRQELQKVR (839 aa)). The tract at residues 36–589 (GYKQENELSE…KRHRDIWSKE (554 aa)) is heparan sulfate N-deacetylase 3. N146, N226, N342, and N392 each carry an N-linked (GlcNAc...) asparagine glycan. Positions 590 to 873 (KTCDRLPKFL…WLRQELQKVR (284 aa)) are heparan sulfate N-sulfotransferase 3. Catalysis depends on K605, which acts as the For sulfotransferase activity. Position 605–609 (605–609 (KTGTT)) interacts with 3'-phosphoadenylyl sulfate. The N-linked (GlcNAc...) asparagine glycan is linked to N658. S703 serves as a coordination point for 3'-phosphoadenylyl sulfate. N794 carries N-linked (GlcNAc...) asparagine glycosylation. Residues C809 and C819 are joined by a disulfide bond. 3'-phosphoadenylyl sulfate is bound at residue 824–828 (KGRKY).

It belongs to the sulfotransferase 1 family. NDST subfamily. As to quaternary structure, monomer. In terms of tissue distribution, expressed in brain, kidney, liver, fetal and adult lung, adult pancreas, placenta, fetal spleen and fetal thymus. Not detected in adult/ fetal heart and skeletal muscle.

The protein resides in the golgi apparatus membrane. The enzyme catalyses alpha-D-glucosaminyl-[heparan sulfate](n) + 3'-phosphoadenylyl sulfate = N-sulfo-alpha-D-glucosaminyl-[heparan sulfate](n) + adenosine 3',5'-bisphosphate + 2 H(+). The protein operates within glycan metabolism; heparan sulfate biosynthesis. Its pathway is glycan metabolism; heparin biosynthesis. In terms of biological role, essential bifunctional enzyme that catalyzes both the N-deacetylation and the N-sulfation of glucosamine (GlcNAc) of the glycosaminoglycan in heparan sulfate. Modifies the GlcNAc-GlcA disaccharide repeating sugar backbone to make N-sulfated heparosan, a prerequisite substrate for later modifications in heparin biosynthesis. Has high deacetylase activity but low sulfotransferase activity. The chain is Bifunctional heparan sulfate N-deacetylase/N-sulfotransferase 3 from Homo sapiens (Human).